The chain runs to 550 residues: Small ribosomal subunit protein uS3m (550 aa).

The interval 112 to 133 (NDDTEEERNEVGGRGAGKRVES) is disordered.

Belongs to the universal ribosomal protein uS3 family.

The protein resides in the mitochondrion. The chain is Small ribosomal subunit protein uS3m (RPS3) from Oenothera berteroana (Bertero's evening primrose).